Here is a 503-residue protein sequence, read N- to C-terminus: Sugar phosphate exchanger 3 (503 aa).

The chain crosses the membrane as a helical span at residues 20–40 (YTHHHLAAFLLTFFSYSLLHA). N-linked (GlcNAc...) asparagine glycosylation is found at N62 and N71. 5 consecutive transmembrane segments (helical) span residues 87 to 107 (TLFLGLLDTIFLFAYAVGLFI), 119 to 139 (LVLTFGMCSSAITMFVFGTLT), 152 to 172 (LVWIVNGLLQSTGWPCVVAIM), 183 to 203 (FVFGLWSACASVGNILGAFLA), and 214 to 234 (AFLVTASVQFAGGIIIFFGLV). N275 carries N-linked (GlcNAc...) asparagine glycosylation. Transmembrane regions (helical) follow at residues 300 to 322 (GVLLYSLAYACLKLVNYSFFFWL), 342 to 362 (IWYDIGGIVGGTVQGLISDLM), 367 to 387 (PVLTVSLLLAVGALFGYSHSP), 395 to 415 (FIMSITGFFIGGPSNMISSAI), 437 to 457 (GIVDGTGSIGAAMGQFLVPLI), and 466 to 486 (VFYFFIFMICMTTVFMVPLIV).

Belongs to the major facilitator superfamily. Organophosphate:Pi antiporter (OPA) (TC 2.A.1.4) family.

The protein resides in the endoplasmic reticulum membrane. It localises to the lysosome membrane. Unlike the other SLC37 members, seems to lack glucose-6-phosphate antiporter activity. This Xenopus laevis (African clawed frog) protein is Sugar phosphate exchanger 3 (slc37a3).